We begin with the raw amino-acid sequence, 190 residues long: GTP cyclohydrolase 1 (190 aa).

Zn(2+) is bound by residues cysteine 75, histidine 78, and cysteine 146.

This sequence belongs to the GTP cyclohydrolase I family. As to quaternary structure, homomer.

The catalysed reaction is GTP + H2O = 7,8-dihydroneopterin 3'-triphosphate + formate + H(+). Its pathway is cofactor biosynthesis; 7,8-dihydroneopterin triphosphate biosynthesis; 7,8-dihydroneopterin triphosphate from GTP: step 1/1. In Campylobacter jejuni subsp. jejuni serotype O:6 (strain 81116 / NCTC 11828), this protein is GTP cyclohydrolase 1.